Consider the following 495-residue polypeptide: Glutamyl-tRNA(Gln) amidotransferase subunit A (495 aa).

Residues Lys-78 and Ser-158 each act as charge relay system in the active site. The Acyl-ester intermediate role is filled by Ser-182.

It belongs to the amidase family. GatA subfamily. In terms of assembly, heterotrimer of A, B and C subunits.

The catalysed reaction is L-glutamyl-tRNA(Gln) + L-glutamine + ATP + H2O = L-glutaminyl-tRNA(Gln) + L-glutamate + ADP + phosphate + H(+). Its function is as follows. Allows the formation of correctly charged Gln-tRNA(Gln) through the transamidation of misacylated Glu-tRNA(Gln) in organisms which lack glutaminyl-tRNA synthetase. The reaction takes place in the presence of glutamine and ATP through an activated gamma-phospho-Glu-tRNA(Gln). The polypeptide is Glutamyl-tRNA(Gln) amidotransferase subunit A (Dinoroseobacter shibae (strain DSM 16493 / NCIMB 14021 / DFL 12)).